The chain runs to 142 residues: uncharacterized protein (142 aa).

The region spanning 1–120 is the N-acetyltransferase domain; it reads MADKFDANDE…TILKWEKNMD (120 aa).

The protein belongs to the acetyltransferase family.

This is an uncharacterized protein from Streptococcus pyogenes serotype M3 (strain ATCC BAA-595 / MGAS315).